The chain runs to 600 residues: MCGIVGFIGEQDAKEILLKGLEKLEYRGYDSAGIAVQAENGVVVYKEKGRIAKLREIVDENVAASVGIGHTRWATHGVPSKVNAHPHQSTSKRFTLVHNGVIENYELVKKEYLQDVTFVSETDTEVIVQLMEQQVSTGLSVEEAFRNTLSLLHGSYAIGLLDAENPNMIYVAKNKSPLLVGVGDNFNVVASDAMAMLQVTDQFIELMDKEIVIVMKESITIKNLQGETIERAPFTAELDASDIEKGTYPHFMLKEIDEQPLVIRNIIQKYQDENGEIELDQDIRNAILDSDRIYIIACGTSYHAGLVGKQFIEKFAKMPVEVHVASEFSYNMPLLTERPFFIYISQSGETADSRAVLVQTNEMGHKALTITNVPGSTLSREADYTLPLYAGPEIAVASTKAYTAQLAVLSILAADIAKAKGEVLDFDLTHELGLVANAMVQLCDQKEEMDALAKQFLATTRNCFFIGRSVDFYVGLEGALKLKEISYIQAEGFAGGELKHGTIALIENGTPVIALATQEHVNLGIRGNVKEVVARGANPCIISMKGLEMEGDSFVLPAVHEALAPLVAVIPLQLISYYAALHRECDVDKPRNLAKSVTVE.

Cys2 acts as the Nucleophile; for GATase activity in catalysis. One can recognise a Glutamine amidotransferase type-2 domain in the interval 2 to 217 (CGIVGFIGEQ…DKEIVIVMKE (216 aa)). 2 consecutive SIS domains span residues 283–422 (IRNA…AKGE) and 452–590 (LAKQ…VDKP). Lys595 (for Fru-6P isomerization activity) is an active-site residue.

As to quaternary structure, homodimer.

It localises to the cytoplasm. The catalysed reaction is D-fructose 6-phosphate + L-glutamine = D-glucosamine 6-phosphate + L-glutamate. Its function is as follows. Catalyzes the first step in hexosamine metabolism, converting fructose-6P into glucosamine-6P using glutamine as a nitrogen source. The chain is Glutamine--fructose-6-phosphate aminotransferase [isomerizing] from Bacillus thuringiensis subsp. konkukian (strain 97-27).